Reading from the N-terminus, the 573-residue chain is Phosphoenolpyruvate-protein phosphotransferase (573 aa).

The active-site Tele-phosphohistidine intermediate is the histidine 190. Arginine 297 and arginine 334 together coordinate phosphoenolpyruvate. Mg(2+) is bound by residues glutamate 433 and aspartate 457. Residues 456–457 (ND) and arginine 467 contribute to the phosphoenolpyruvate site. The active-site Proton donor is the cysteine 504.

This sequence belongs to the PEP-utilizing enzyme family. In terms of assembly, homodimer. Mg(2+) is required as a cofactor.

It is found in the cytoplasm. The catalysed reaction is L-histidyl-[protein] + phosphoenolpyruvate = N(pros)-phospho-L-histidyl-[protein] + pyruvate. General (non sugar-specific) component of the phosphoenolpyruvate-dependent sugar phosphotransferase system (sugar PTS). This major carbohydrate active-transport system catalyzes the phosphorylation of incoming sugar substrates concomitantly with their translocation across the cell membrane. Enzyme I transfers the phosphoryl group from phosphoenolpyruvate (PEP) to the phosphoryl carrier protein (HPr). The sequence is that of Phosphoenolpyruvate-protein phosphotransferase (ptsI) from Borreliella burgdorferi (strain ATCC 35210 / DSM 4680 / CIP 102532 / B31) (Borrelia burgdorferi).